The chain runs to 123 residues: DNA-directed RNA polymerase I subunit RPA12 (123 aa).

Zn(2+) is bound by residues Cys17, Cys20, Cys35, Cys38, Cys84, and Cys87. The segment at 17 to 38 (CPDCGSVLPLPGVQDAVACTRC) adopts a C4-type zinc-finger fold. Residues 80–120 (VDRRCSRCGHEGMAYHTRQMRSADEGQTVFYTCTNCKFQEK) form a TFIIS-type zinc finger. The Hairpin motif lies at 103-104 (DE). Zn(2+) contacts are provided by Cys112 and Cys115.

Belongs to the archaeal RpoM/eukaryotic RPA12/RPB9/RPC11 RNA polymerase family. Component of the RNA polymerase I (Pol I) complex consisting of at least 13 subunits.

It is found in the nucleus. The protein resides in the nucleolus. Core component of RNA polymerase I (Pol I), a DNA-dependent RNA polymerase which synthesizes ribosomal RNA precursors using the four ribonucleoside triphosphates as substrates. Can mediate Pol I proofreading of the nascent RNA transcript. Anchors into the Pol I active site to monitor transcription fidelity and cleave mis-incorporated 5'-ribonucleotides. The polypeptide is DNA-directed RNA polymerase I subunit RPA12 (Bos taurus (Bovine)).